The sequence spans 135 residues: Large ribosomal subunit protein mL41 (135 aa).

A mitochondrion-targeting transit peptide spans 1–13 (MGFLTAVTQGLVR).

Belongs to the mitochondrion-specific ribosomal protein mL41 family. In terms of assembly, component of the mitochondrial ribosome large subunit (39S) which comprises a 16S rRNA and about 50 distinct proteins. Interacts with BCL2.

The protein localises to the mitochondrion. Component of the mitochondrial ribosome large subunit. Also involved in apoptosis and cell cycle. Enhances p53/TP53 stability, thereby contributing to p53/TP53-induced apoptosis in response to growth-inhibitory condition. Enhances p53/TP53 translocation to the mitochondria. Has the ability to arrest the cell cycle at the G1 phase, possibly by stabilizing the CDKN1A and CDKN1B (p27Kip1) proteins. The sequence is that of Large ribosomal subunit protein mL41 (Mrpl41) from Mus musculus (Mouse).